We begin with the raw amino-acid sequence, 235 residues long: uncharacterized protein (235 aa).

2 disordered regions span residues 20 to 64 and 140 to 164; these read IHPN…LPIK and SQFFNNNNNNNNNNNNSNNNKNFDQ. Composition is skewed to low complexity over residues 30–60 and 140–161; these read NNNNNINNNNNNNNNNNNNNNNNNNNNSNNN and SQFFNNNNNNNNNNNNSNNNKN. The stretch at 174–213 forms a coiled coil; that stretch reads KYMEFLSDIEQLNSDLKESKDNLESISIEMVLLETRLKGL.

This is an uncharacterized protein from Dictyostelium discoideum (Social amoeba).